Here is a 347-residue protein sequence, read N- to C-terminus: NADH-ubiquinone oxidoreductase chain 2 (347 aa).

A run of 10 helical transmembrane segments spans residues 13-33 (IFAGTLITALSSHWFFAWVGL), 55-75 (AAIKYFLTQATASMILLMAIL), 96-116 (LMIVVAMAMKLGMAPFHFWVP), 123-143 (PLMSGLLLLTWQKLAPMSIMY), 150-170 (NVSLLLTLSILSILAGSWGGL), 178-198 (ILAYSSITHVGWMMAVLPYNP), 201-221 (TILNLTIYIILTTTTFLLLNL), 247-267 (TLLSLGGLPPLTGFLPKWLII), 277-297 (ITPTIMAIITLLNLYFYLRLI), and 325-345 (FLPTLITLTTLLLPISPFMLM).

This sequence belongs to the complex I subunit 2 family. As to quaternary structure, core subunit of respiratory chain NADH dehydrogenase (Complex I) which is composed of 45 different subunits. Interacts with TMEM242.

The protein resides in the mitochondrion inner membrane. It carries out the reaction a ubiquinone + NADH + 5 H(+)(in) = a ubiquinol + NAD(+) + 4 H(+)(out). Core subunit of the mitochondrial membrane respiratory chain NADH dehydrogenase (Complex I) which catalyzes electron transfer from NADH through the respiratory chain, using ubiquinone as an electron acceptor. Essential for the catalytic activity and assembly of complex I. This Gorilla gorilla gorilla (Western lowland gorilla) protein is NADH-ubiquinone oxidoreductase chain 2.